The primary structure comprises 330 residues: MNAYYEQDADLKYLQGKNIAVLGFGSQGHAHALNLKESGLNVCVGLRPDSSSCEKARENGLEVNTIADAVAWADIVMVLLPDQYQKSIYESEIKPNLKEGNTLAFAHGFNIHYNQIVPPGTVNVIMIAPKSPGHLVRRTYTQGNGVPCLIAVHQDYTGEARQQALAWAKGLGGTKAGVIETTFKNETETDLFGEQAVLCGGSAELIKAGFETLVEAGYPEELAYFECMHELKLIVDLYYEGGLSRMNYSVSDTAEYGGMTRGPRVITSDVKAEMKKILEEVQDGRFAKEFIDECNAGYPNMKKLRESNADHPIEKVGAKLRDMMSWLLKK.

The KARI N-terminal Rossmann domain maps to 1–181; it reads MNAYYEQDAD…GGTKAGVIET (181 aa). NADP(+) is bound by residues 24–27, Arg-47, Ser-50, Ser-52, and 82–85; these read FGSQ and DQYQ. His-107 is a catalytic residue. Position 133 (Gly-133) interacts with NADP(+). The region spanning 182 to 327 is the KARI C-terminal knotted domain; it reads TFKNETETDL…AKLRDMMSWL (146 aa). Mg(2+)-binding residues include Asp-190, Glu-194, Glu-226, and Glu-230. Residue Ser-251 participates in substrate binding.

Belongs to the ketol-acid reductoisomerase family. The cofactor is Mg(2+).

It carries out the reaction (2R)-2,3-dihydroxy-3-methylbutanoate + NADP(+) = (2S)-2-acetolactate + NADPH + H(+). The catalysed reaction is (2R,3R)-2,3-dihydroxy-3-methylpentanoate + NADP(+) = (S)-2-ethyl-2-hydroxy-3-oxobutanoate + NADPH + H(+). It functions in the pathway amino-acid biosynthesis; L-isoleucine biosynthesis; L-isoleucine from 2-oxobutanoate: step 2/4. The protein operates within amino-acid biosynthesis; L-valine biosynthesis; L-valine from pyruvate: step 2/4. Its function is as follows. Involved in the biosynthesis of branched-chain amino acids (BCAA). Catalyzes an alkyl-migration followed by a ketol-acid reduction of (S)-2-acetolactate (S2AL) to yield (R)-2,3-dihydroxy-isovalerate. In the isomerase reaction, S2AL is rearranged via a Mg-dependent methyl migration to produce 3-hydroxy-3-methyl-2-ketobutyrate (HMKB). In the reductase reaction, this 2-ketoacid undergoes a metal-dependent reduction by NADPH to yield (R)-2,3-dihydroxy-isovalerate. In Chlorobium phaeobacteroides (strain BS1), this protein is Ketol-acid reductoisomerase (NADP(+)).